Reading from the N-terminus, the 582-residue chain is Phosphoglucomutase, cytoplasmic (582 aa).

Alpha-D-glucose 1,6-bisphosphate contacts are provided by Arg-25 and Ser-124. Residue Ser-124 is the Phosphoserine intermediate of the active site. Mg(2+)-binding residues include Ser-124, Asp-300, Asp-302, and Asp-304. Residue Ser-124 is modified to Phosphoserine. Alpha-D-glucose 1,6-bisphosphate is bound by residues Asp-304, Arg-305, Thr-368, Glu-387, Ser-389, and Lys-400.

This sequence belongs to the phosphohexose mutase family. As to quaternary structure, monomer. Requires Mg(2+) as cofactor.

It is found in the cytoplasm. It catalyses the reaction alpha-D-glucose 1-phosphate = alpha-D-glucose 6-phosphate. It carries out the reaction O-phospho-L-seryl-[protein] + alpha-D-glucose 1-phosphate = alpha-D-glucose 1,6-bisphosphate + L-seryl-[protein]. The catalysed reaction is alpha-D-glucose 1,6-bisphosphate + L-seryl-[protein] = O-phospho-L-seryl-[protein] + alpha-D-glucose 6-phosphate. Functionally, catalyzes the reversible isomerization of alpha-D-glucose 1-phosphate to alpha-D-glucose 6-phosphate. The mechanism proceeds via the intermediate compound alpha-D-glucose 1,6-bisphosphate. This enzyme participates in both the breakdown and synthesis of glucose. The polypeptide is Phosphoglucomutase, cytoplasmic (PGM1) (Pisum sativum (Garden pea)).